The primary structure comprises 305 residues: MSSNQIALKNLVSMETLSNEEVMALIKRGIEFKNGAKVHYDEQHIVSNLFFEPSTRTHKAFEVAELKLGCDLLDFDVKTSSVNKGETLYDTILTMSALGVDVCVIRHPEVDYYKELVESPTITTSIVNGGDGSGQHPSQSLLDLMTIYQEFGRFEGLKVAIAGDLDHSRVAKSNMQILKRLGAELYFAGPEEWRSQEFADYGKFVTIDEVIEEVDVMMFLRVQHERHDYESIFSKENYHRLHGLTQERYDRMKDTAILMHPAPVNRDVEIADHLVEAPKSRIVEQMTNGVFVRMAIIEAVLKGRQ.

2 residues coordinate carbamoyl phosphate: Arg56 and Thr57. Lys84 is an L-aspartate binding site. Residues Arg106, His136, and Gln139 each coordinate carbamoyl phosphate. Residues Arg169 and Arg221 each contribute to the L-aspartate site. The carbamoyl phosphate site is built by Ala262 and Pro263.

The protein belongs to the aspartate/ornithine carbamoyltransferase superfamily. ATCase family. In terms of assembly, heterododecamer (2C3:3R2) of six catalytic PyrB chains organized as two trimers (C3), and six regulatory PyrI chains organized as three dimers (R2).

It catalyses the reaction carbamoyl phosphate + L-aspartate = N-carbamoyl-L-aspartate + phosphate + H(+). The protein operates within pyrimidine metabolism; UMP biosynthesis via de novo pathway; (S)-dihydroorotate from bicarbonate: step 2/3. In terms of biological role, catalyzes the condensation of carbamoyl phosphate and aspartate to form carbamoyl aspartate and inorganic phosphate, the committed step in the de novo pyrimidine nucleotide biosynthesis pathway. The sequence is that of Aspartate carbamoyltransferase catalytic subunit from Streptococcus sanguinis (strain SK36).